A 436-amino-acid polypeptide reads, in one-letter code: AP-2 complex subunit mu-B (436 aa).

The MHD domain maps to 170–435 (RNELFLDVLE…IGRSGIYETR (266 aa)). 3 residues coordinate a 1,2-diacyl-sn-glycero-3-phospho-(1D-myo-inositol-3,4,5-trisphosphate): lysine 342, lysine 346, and lysine 355.

This sequence belongs to the adaptor complexes medium subunit family. In terms of assembly, adaptor protein complex 2 (AP-2) is a heterotetramer composed of two large adaptins (alpha-type subunit and beta-type subunit), a medium adaptin (mu-type subunit) and a small adaptin (sigma-type subunit).

It localises to the cell membrane. The protein resides in the membrane. Its subcellular location is the coated pit. Component of the adaptor complexes which link clathrin to receptors in coated vesicles. Clathrin-associated protein complexes are believed to interact with the cytoplasmic tails of membrane proteins, leading to their selection and concentration. AP50 is a subunit of the plasma membrane adaptor. The complex binds polyphosphoinositide-containing lipids. The polypeptide is AP-2 complex subunit mu-B (ap2m1b) (Danio rerio (Zebrafish)).